The primary structure comprises 501 residues: L-arabinose isomerase (501 aa).

Mn(2+) contacts are provided by Glu307, Glu334, His351, and His450.

The protein belongs to the arabinose isomerase family. The cofactor is Mn(2+).

The enzyme catalyses beta-L-arabinopyranose = L-ribulose. The protein operates within carbohydrate degradation; L-arabinose degradation via L-ribulose; D-xylulose 5-phosphate from L-arabinose (bacterial route): step 1/3. In terms of biological role, catalyzes the conversion of L-arabinose to L-ribulose. This Acidothermus cellulolyticus (strain ATCC 43068 / DSM 8971 / 11B) protein is L-arabinose isomerase.